Here is a 787-residue protein sequence, read N- to C-terminus: Protein PAT1 homolog 2 (787 aa).

Disordered regions lie at residues 94-120 (KHLG…WTQD), 134-221 (EQVQ…NASP), 338-374 (VREH…GLQF), 411-445 (LAKK…QQPQ), and 765-787 (VSES…FVRG). A compositionally biased stretch (polar residues) spans 105–120 (GSFSRESSTATDWTQD). Residues 142 to 153 (SSQPQSSPNSNS) are compositionally biased toward low complexity. Composition is skewed to polar residues over residues 154 to 171 (LYRT…QHYS), 180 to 198 (STFT…SSPS), and 208 to 221 (GGSQ…NASP). Ser-184 and Ser-192 each carry phosphoserine. Basic residues predominate over residues 341–353 (HKHKSSHRSRKNR). 2 stretches are compositionally biased toward polar residues: residues 355 to 373 (GISQ…SGLQ) and 436 to 445 (SRNSSDQQPQ).

Functionally, activator of mRNA decapping. Involved in mRNA decay via decapping. The sequence is that of Protein PAT1 homolog 2 from Arabidopsis thaliana (Mouse-ear cress).